Consider the following 233-residue polypeptide: Auxin-responsive protein IAA11 (233 aa).

2 disordered regions span residues 1 to 27 (MAGL…RSSG) and 46 to 100 (PAAV…PKAQ). The EAR-like (transcriptional repression) motif lies at 11-15 (LRLGL). A compositionally biased stretch (acidic residues) spans 54 to 63 (GAQEDKEDAD). Residues 122 to 217 (AALVKVSMDG…SCKRLRIMKG (96 aa)) enclose the PB1 domain.

Belongs to the Aux/IAA family. As to quaternary structure, homodimers and heterodimers. As to expression, highly expressed in etiolated shoots. Expressed in roots.

The protein resides in the nucleus. In terms of biological role, aux/IAA proteins are short-lived transcriptional factors that function as repressors of early auxin response genes at low auxin concentrations. This is Auxin-responsive protein IAA11 (IAA11) from Oryza sativa subsp. japonica (Rice).